The following is a 212-amino-acid chain: Protein-L-isoaspartate O-methyltransferase (212 aa).

The active site involves Ser60.

Belongs to the methyltransferase superfamily. L-isoaspartyl/D-aspartyl protein methyltransferase family.

The protein resides in the cytoplasm. The catalysed reaction is [protein]-L-isoaspartate + S-adenosyl-L-methionine = [protein]-L-isoaspartate alpha-methyl ester + S-adenosyl-L-homocysteine. Catalyzes the methyl esterification of L-isoaspartyl residues in peptides and proteins that result from spontaneous decomposition of normal L-aspartyl and L-asparaginyl residues. It plays a role in the repair and/or degradation of damaged proteins. The chain is Protein-L-isoaspartate O-methyltransferase from Methanococcus maripaludis (strain C7 / ATCC BAA-1331).